The sequence spans 407 residues: Arginine biosynthesis bifunctional protein ArgJ (407 aa).

Residues T169, K192, T203, E283, N402, and S407 each coordinate substrate. The Nucleophile role is filled by T203.

Belongs to the ArgJ family. Heterotetramer of two alpha and two beta chains.

Its subcellular location is the cytoplasm. It carries out the reaction N(2)-acetyl-L-ornithine + L-glutamate = N-acetyl-L-glutamate + L-ornithine. The enzyme catalyses L-glutamate + acetyl-CoA = N-acetyl-L-glutamate + CoA + H(+). The protein operates within amino-acid biosynthesis; L-arginine biosynthesis; L-ornithine and N-acetyl-L-glutamate from L-glutamate and N(2)-acetyl-L-ornithine (cyclic): step 1/1. It participates in amino-acid biosynthesis; L-arginine biosynthesis; N(2)-acetyl-L-ornithine from L-glutamate: step 1/4. Its function is as follows. Catalyzes two activities which are involved in the cyclic version of arginine biosynthesis: the synthesis of N-acetylglutamate from glutamate and acetyl-CoA as the acetyl donor, and of ornithine by transacetylation between N(2)-acetylornithine and glutamate. The chain is Arginine biosynthesis bifunctional protein ArgJ from Mycobacterium leprae (strain TN).